The sequence spans 735 residues: Disintegrin and metalloproteinase domain-containing protein 2 (735 aa).

The signal sequence occupies residues 1–18 (MWLILLLLSGLSELGGLS). The propeptide occupies 19–180 (QSQTEGTREK…YKIRSIKPQR (162 aa)). Residues 19 to 686 (QSQTEGTREK…ASAYRSKSPR (668 aa)) are Extracellular-facing. N-linked (GlcNAc...) asparagine glycans are attached at residues N128, N226, and N279. The Peptidase M12B domain occupies 184–381 (HYLEIHIVVE…QSSHCLQNQP (198 aa)). 4 disulfide bridges follow: C293/C376, C335/C360, C337/C342, and C449/C469. N-linked (GlcNAc...) asparagine glycans are attached at residues N359, N463, N489, N569, and N585. The 88-residue stretch at 389 to 476 (MAVCGNGEVE…EVCEDFFVQN (88 aa)) folds into the Disintegrin domain. An EGF-like domain is found at 615-648 (LGYDCNLEKCNHHGVCNNKKNCHCDPTYLPPDCK). Disulfide bonds link C619-C630, C624-C636, and C638-C647. The chain crosses the membrane as a helical span at residues 687 to 707 (WPFFLIIPFYVVILVLIGMLV). Residues 708–735 (KVYSQRMKWRMDDFSSEEQFESESESKD) are Cytoplasmic-facing. A Phosphoserine modification is found at S729.

As to quaternary structure, heterodimer with ADAM1/fertilin subunit alpha. The signal and the metalloprotease domain are cleaved during the epididymal maturation of the spermatozoa. Expressed in the testis and testicular sperm (at protein level).

Its subcellular location is the membrane. Functionally, sperm surface membrane protein that may be involved in sperm-egg plasma membrane adhesion and fusion during fertilization. Could have a direct role in sperm-zona binding or migration of sperm from the uterus into the oviduct. Interactions with egg membrane could be mediated via binding between its disintegrin-like domain to one or more integrins receptors on the egg. This is a non catalytic metalloprotease-like protein. This chain is Disintegrin and metalloproteinase domain-containing protein 2, found in Mus musculus (Mouse).